Consider the following 489-residue polypeptide: Ammonium transporter Rh type C (489 aa).

Residues 1-21 (MGNCADCLRGFFCPPKNTNIR) are Cytoplasmic-facing. Residues 22–42 (ISLPAVCFVWQIAMIVLFGVF) traverse the membrane as a helical segment. Topologically, residues 43–75 (IRYDAESDIRLWLQLKHTNNITSDIENDFYFRY) are extracellular. Residue Asn-62 is glycosylated (N-linked (GlcNAc...) asparagine). A helical membrane pass occupies residues 76–96 (PSFQDVHVMIFVGFGFLMTFL). Residues 97–100 (KRYS) are Cytoplasmic-facing. Residues 101 to 121 (FGGVGFNFLIGAFGLQWALLM) traverse the membrane as a helical segment. At 122-140 (QGWFHALDPTTGKISIGVE) the chain is on the extracellular side. Residues 141 to 161 (GLINADFCVAASLIAYGALLG) traverse the membrane as a helical segment. Topologically, residues 162-169 (KVSPVQLM) are cytoplasmic. Residues 170-190 (VVTLFGVTLFAVEEYIILNLL) form a helical membrane-spanning segment. Residues 191–195 (HCRDA) are Extracellular-facing. Residues 196–216 (GGSMVIHCFGGYYGLTISWIL) traverse the membrane as a helical segment. Residues 217-235 (YRPKLHQSKRLNGSVYHSD) are Cytoplasmic-facing. A helical transmembrane segment spans residues 236 to 256 (VFAMIGTLFLWMFWPSFNSAI). Topologically, residues 257–266 (TDHGSGQHRT) are extracellular. Residues 267-287 (AINTYIALASSVLTTVAISSA) traverse the membrane as a helical segment. Residues 288 to 298 (SEKRGKLDMVH) are Cytoplasmic-facing. A helical transmembrane segment spans residues 299–319 (IQNATLAGGVAMGTAAEFMIT). Position 320 (Pro-320) is a topological domain, extracellular. Residues 321 to 341 (YGALIVGFCTGIISTFGYLFV) traverse the membrane as a helical segment. The Cytoplasmic portion of the chain corresponds to 342–359 (SPFMEKYLKIQDTCGVHN). The helical transmembrane segment at 360–380 (LHAMPGMLGGFIGAIVAAAAT) threads the bilayer. The Extracellular portion of the chain corresponds to 381 to 412 (EEVYSREGLIETFDFEGKFADRTVGTQGGFQA). A helical transmembrane segment spans residues 413-433 (AGVCVAIAFAVVGGAVVGLIL). Over 434–489 (RLPIWGDPADDNCFDDEVYWEVPEDEEGILPVLEYNNHMTHKHQDISESNFSVEQS) the chain is Cytoplasmic.

Belongs to the ammonium transporter (TC 2.A.49) family. Rh subfamily. Homotrimer.

It is found in the apical cell membrane. Functionally, functions as an ammonia transporter. May play a role in the elimination of ammonia in the gill. The polypeptide is Ammonium transporter Rh type C (rhcg) (Gasterosteus aculeatus (Three-spined stickleback)).